Reading from the N-terminus, the 457-residue chain is PDZ and LIM domain protein 7 (457 aa).

Residues 1–85 (MDSFKVVLEG…RLSLGLSRAQ (85 aa)) enclose the PDZ domain. Position 78 is a phosphoserine (S78). 2 disordered regions span residues 82–166 (SRAQ…QSRS) and 186–226 (FMKK…PWAV). A Phosphothreonine modification is found at T96. Residue R103 is modified to Asymmetric dimethylarginine. S111 carries the phosphoserine modification. Residues 126–135 (DSTLRQNGQL) show a composition bias toward polar residues. Residues 144 to 157 (SKQRLMEDTEDWRP) are compositionally biased toward basic and acidic residues. A Phosphoserine modification is found at S247. 3 consecutive LIM zinc-binding domains span residues 280-338 (PVCH…VRYA), 339-398 (PNCA…MFGT), and 399-457 (KCRG…FSHV).

In terms of assembly, specifically binds via its LIM zinc-binding 3 domain (LIM 3) domain to endocytic codes of INSR, but not with those of IGF1R, LDLR, TFRC, or EGFR. Interacts with various PKC isoforms through the LIM zinc-binding domains. Binds to RET in a phosphorylation-independent manner via its LIM zinc-binding domain 2 (LIM 2). Probably part of a complex with SHC and the RET dimer. Interacts with TPM2, TBX4 and TBX5.

It is found in the cytoplasm. The protein localises to the cytoskeleton. Its function is as follows. May function as a scaffold on which the coordinated assembly of proteins can occur. May play a role as an adapter that, via its PDZ domain, localizes LIM-binding proteins to actin filaments of both skeletal muscle and nonmuscle tissues. Involved in both of the two fundamental mechanisms of bone formation, direct bone formation (e.g. embryonic flat bones mandible and cranium), and endochondral bone formation (e.g. embryonic long bone development). Plays a role during fracture repair. Involved in BMP6 signaling pathway. The chain is PDZ and LIM domain protein 7 (Pdlim7) from Mus musculus (Mouse).